The sequence spans 78 residues: UPF0349 protein SAHV_0934 (78 aa).

It belongs to the UPF0349 family.

In Staphylococcus aureus (strain Mu3 / ATCC 700698), this protein is UPF0349 protein SAHV_0934.